Here is a 161-residue protein sequence, read N- to C-terminus: MAEPTGLLEMSELPGDSSVPQVGTASGVSDVLRGAVGGGVRVQEAREGPVAEAARSMARMPGPVPGPIPSSVPGLASAPDPHQQLAFLEINRQLLFREYLDGSSMIPVRLLRDFEERRRLFVEGCKAREAAFDADPPQMDFAAVAFTVALTASEALSPLAD.

2 disordered regions span residues 1–26 and 54–77; these read MAEPTGLLEMSELPGDSSVPQVGTAS and ARSMARMPGPVPGPIPSSVPGLAS.

As to quaternary structure, homodimer and heterodimer with EID2. Interacts with HDAC1 and HDAC2.

The protein resides in the nucleus. In terms of biological role, acts as a repressor of MYOD-dependent transcription, glucocorticoid receptor-dependent transcription, and muscle differentiation. In Homo sapiens (Human), this protein is EP300-interacting inhibitor of differentiation 2B.